Here is a 372-residue protein sequence, read N- to C-terminus: 4-hydroxy-3-methylbut-2-en-1-yl diphosphate synthase (flavodoxin) (372 aa).

Cys-270, Cys-273, Cys-305, and Glu-312 together coordinate [4Fe-4S] cluster.

It belongs to the IspG family. The cofactor is [4Fe-4S] cluster.

It carries out the reaction (2E)-4-hydroxy-3-methylbut-2-enyl diphosphate + oxidized [flavodoxin] + H2O + 2 H(+) = 2-C-methyl-D-erythritol 2,4-cyclic diphosphate + reduced [flavodoxin]. It participates in isoprenoid biosynthesis; isopentenyl diphosphate biosynthesis via DXP pathway; isopentenyl diphosphate from 1-deoxy-D-xylulose 5-phosphate: step 5/6. Functionally, converts 2C-methyl-D-erythritol 2,4-cyclodiphosphate (ME-2,4cPP) into 1-hydroxy-2-methyl-2-(E)-butenyl 4-diphosphate. This chain is 4-hydroxy-3-methylbut-2-en-1-yl diphosphate synthase (flavodoxin), found in Marinobacter nauticus (strain ATCC 700491 / DSM 11845 / VT8) (Marinobacter aquaeolei).